Reading from the N-terminus, the 337-residue chain is MAKVKIGINGFGRIGRLVARVALVRDDVELVAVNDPFITVDYMAYMFKYDTVHGQYKHHELKVKDEKTLLFGDKPVAVFGLRNPEEIPWAETGAEYVVESTGVFTEKEKAAAHLKGGAKKVIISAPSKDAPMFVVGVNEKTYTPDIDVVSNASCTTNCLAPLAKVIHDRFGIVEGLMTTVHSITATQKTVDGPSSKDWRGGRAASFNIIPSSTGAAKAVGKVLPDLNGKLTGMAFRVPTVDVSVVDLTVTLAKEASYDEIKAAIKEESEGKLKGILGYTEEDVVSSDFVGDSRSSIFDAKAGIALSKKFVKIVAWYDNEWGYSSRVVDLIRHMAAAK.

NAD(+) is bound by residues 13 to 14, Asp35, and Arg82; that span reads RI. D-glyceraldehyde 3-phosphate-binding positions include 153-155, Thr184, 213-214, and Arg236; these read SCT and TG. Residue Cys154 is the Nucleophile of the active site. Asn318 serves as a coordination point for NAD(+).

This sequence belongs to the glyceraldehyde-3-phosphate dehydrogenase family. As to quaternary structure, homotetramer.

Its subcellular location is the cytoplasm. It carries out the reaction D-glyceraldehyde 3-phosphate + phosphate + NAD(+) = (2R)-3-phospho-glyceroyl phosphate + NADH + H(+). It participates in carbohydrate degradation; glycolysis; pyruvate from D-glyceraldehyde 3-phosphate: step 1/5. In terms of biological role, key enzyme in glycolysis that catalyzes the first step of the pathway by converting D-glyceraldehyde 3-phosphate (G3P) into 3-phospho-D-glyceroyl phosphate. Essential for the maintenance of cellular ATP levels and carbohydrate metabolism. This is Glyceraldehyde-3-phosphate dehydrogenase, cytosolic (GAPC) from Craterostigma plantagineum (Blue gem).